We begin with the raw amino-acid sequence, 151 residues long: Nucleoside diphosphate kinase (151 aa).

ATP contacts are provided by K11, F59, R87, T93, R104, and N114. Residue H117 is the Pros-phosphohistidine intermediate of the active site.

It belongs to the NDK family. Homotetramer. Mg(2+) is required as a cofactor.

The protein resides in the cytoplasm. The catalysed reaction is a 2'-deoxyribonucleoside 5'-diphosphate + ATP = a 2'-deoxyribonucleoside 5'-triphosphate + ADP. The enzyme catalyses a ribonucleoside 5'-diphosphate + ATP = a ribonucleoside 5'-triphosphate + ADP. Functionally, major role in the synthesis of nucleoside triphosphates other than ATP. The ATP gamma phosphate is transferred to the NDP beta phosphate via a ping-pong mechanism, using a phosphorylated active-site intermediate. The protein is Nucleoside diphosphate kinase of Prochlorococcus marinus (strain NATL1A).